Here is a 191-residue protein sequence, read N- to C-terminus: MARGPAGKNRGVSKISKWYKADDEATPFHRRQLKKATATKLRNDIAPGTVLILLAGRFRGKRVVFLKQLKSGLLLVTGPYKVNGVPLKRVNQAYTLSTSTKVDLTGVNTAKFEDDYFGREKARKNHKNLFKAELTEEQKKKETERKNARKQDQQAVDTPLLAAVKKVEFLKNYLASKFTLNNNDRPHEMKF.

This sequence belongs to the eukaryotic ribosomal protein eL6 family.

In Tetrahymena thermophila (strain SB210), this protein is Large ribosomal subunit protein eL6 (RPL6).